Consider the following 191-residue polypeptide: Recombination protein RecR (191 aa).

The C4-type zinc-finger motif lies at 51–66 (CQTCFHLSADPECEIC). The Toprim domain occupies 74 to 168 (GVICVVADSR…SVSRIAYGLP (95 aa)).

This sequence belongs to the RecR family.

In terms of biological role, may play a role in DNA repair. It seems to be involved in an RecBC-independent recombinational process of DNA repair. It may act with RecF and RecO. This is Recombination protein RecR from Synechococcus sp. (strain CC9605).